Reading from the N-terminus, the 2522-residue chain is Neurogenic locus notch homolog protein 1 (2522 aa).

The signal sequence occupies residues 1–19 (MYRIGLLVLIWSLLGLAQG). 4 EGF-like domains span residues 20 to 57 (LRCT…ERCQ), 58 to 99 (YPNP…KVCL), 102 to 140 (VDNA…DSCQ), and 141 to 177 (QADP…ATCK). Topologically, residues 20-1730 (LRCTQTAEMC…ETAKPPPPLY (1711 aa)) are extracellular. 33 disulfide bridges follow: cysteine 22-cysteine 35, cysteine 29-cysteine 45, cysteine 47-cysteine 56, cysteine 62-cysteine 74, cysteine 68-cysteine 87, cysteine 89-cysteine 98, cysteine 106-cysteine 117, cysteine 111-cysteine 128, cysteine 130-cysteine 139, cysteine 145-cysteine 156, cysteine 150-cysteine 165, cysteine 167-cysteine 176, cysteine 183-cysteine 194, cysteine 188-cysteine 203, cysteine 205-cysteine 214, cysteine 221-cysteine 232, cysteine 226-cysteine 242, cysteine 244-cysteine 253, cysteine 260-cysteine 271, cysteine 265-cysteine 280, cysteine 282-cysteine 291, cysteine 298-cysteine 311, cysteine 305-cysteine 320, cysteine 322-cysteine 331, cysteine 338-cysteine 349, cysteine 343-cysteine 358, cysteine 360-cysteine 369, cysteine 375-cysteine 386, cysteine 380-cysteine 397, cysteine 399-cysteine 408, cysteine 415-cysteine 428, cysteine 422-cysteine 437, and cysteine 439-cysteine 448. The EGF-like 5; calcium-binding domain maps to 179–215 (DINECSQNPCRNGGQCLNEFGSYRCNCQNRFTGRNCE). The region spanning 217-254 (PYVPCNPSPCLNGGTCRQTDDTSYECTCLPGFSGQNCE) is the EGF-like 6 domain. Threonine 231 is a glycosylation site (O-linked (Fuc...) threonine; alternate). Threonine 231 carries an O-linked (GalNAc...) threonine; alternate glycan. Residues 256-292 (NIDDCPSNNCRNGGTCVDGVNTYNCQCPPDWTGQYCT) form the EGF-like 7; calcium-binding domain. The 39-residue stretch at 294-332 (DVDECQLMPNACQNGGTCHNTYGGYNCVCVNGWTGEDCS) folds into the EGF-like 8; calcium-binding domain. The 37-residue stretch at 334–370 (NIDDCANAACHSGATCHDRVASFFCECPHGRTGLLCH) folds into the EGF-like 9; calcium-binding domain. The region spanning 371–409 (LDNACISNPCNEGSNCDTNPVNGKAICTCPPGYTGPACN) is the EGF-like 10 domain. The EGF-like 11; calcium-binding domain occupies 411 to 449 (DVDECSLGANPCEHGGRCTNTLGSFQCNCPQGYAGPRCE). Ca(2+) is bound by residues threonine 431 and serine 434. O-linked (Glc...) serine glycosylation is present at serine 434. 3 residues coordinate Ca(2+): aspartate 451, valine 452, and glutamate 454. The 37-residue stretch at 451–487 (DVNECLSNPCQNDATCLDQIGEFQCICMPGYEGLYCE) folds into the EGF-like 12; calcium-binding domain. 3 disulfide bridges follow: cysteine 455/cysteine 466, cysteine 460/cysteine 475, and cysteine 477/cysteine 486. O-linked (Glc...) serine glycosylation is present at serine 457. O-linked (Fuc...) threonine glycosylation occurs at threonine 465. The Ca(2+) site is built by aspartate 468 and glutamine 469. Asparagine 489, isoleucine 490, and glutamate 492 together coordinate Ca(2+). Residues 489-525 (NIDECASNPCLHNGKCVDKINEFHCECPTGFNGNLCQ) form the EGF-like 13; calcium-binding domain. 75 disulfide bridges follow: cysteine 493/cysteine 504, cysteine 498/cysteine 513, cysteine 515/cysteine 524, cysteine 531/cysteine 542, cysteine 536/cysteine 551, cysteine 553/cysteine 562, cysteine 569/cysteine 579, cysteine 574/cysteine 588, cysteine 590/cysteine 599, cysteine 606/cysteine 617, cysteine 611/cysteine 626, cysteine 628/cysteine 637, cysteine 644/cysteine 654, cysteine 649/cysteine 663, cysteine 665/cysteine 674, cysteine 681/cysteine 692, cysteine 686/cysteine 701, cysteine 703/cysteine 712, cysteine 719/cysteine 729, cysteine 724/cysteine 738, cysteine 740/cysteine 749, cysteine 756/cysteine 767, cysteine 761/cysteine 776, cysteine 778/cysteine 787, cysteine 794/cysteine 805, cysteine 799/cysteine 814, cysteine 816/cysteine 825, cysteine 832/cysteine 843, cysteine 837/cysteine 854, cysteine 856/cysteine 865, cysteine 872/cysteine 883, cysteine 877/cysteine 892, cysteine 894/cysteine 903, cysteine 910/cysteine 921, cysteine 915/cysteine 930, cysteine 932/cysteine 941, cysteine 948/cysteine 959, cysteine 953/cysteine 968, cysteine 970/cysteine 979, cysteine 986/cysteine 997, cysteine 991/cysteine 1006, cysteine 1008/cysteine 1017, cysteine 1024/cysteine 1035, cysteine 1029/cysteine 1044, cysteine 1046/cysteine 1055, cysteine 1062/cysteine 1073, cysteine 1067/cysteine 1082, cysteine 1084/cysteine 1093, cysteine 1100/cysteine 1121, cysteine 1115/cysteine 1130, cysteine 1132/cysteine 1141, cysteine 1148/cysteine 1159, cysteine 1153/cysteine 1168, cysteine 1170/cysteine 1179, cysteine 1186/cysteine 1197, cysteine 1191/cysteine 1206, cysteine 1208/cysteine 1217, cysteine 1224/cysteine 1243, cysteine 1237/cysteine 1252, cysteine 1254/cysteine 1263, cysteine 1270/cysteine 1283, cysteine 1275/cysteine 1292, cysteine 1294/cysteine 1303, cysteine 1310/cysteine 1321, cysteine 1315/cysteine 1333, cysteine 1335/cysteine 1344, cysteine 1351/cysteine 1362, cysteine 1356/cysteine 1371, cysteine 1373/cysteine 1382, cysteine 1390/cysteine 1401, cysteine 1395/cysteine 1412, cysteine 1414/cysteine 1423, cysteine 1447/cysteine 1470, cysteine 1452/cysteine 1465, and cysteine 1461/cysteine 1477. Serine 495 carries an O-linked (Glc...) serine glycan. Aspartate 506 and lysine 507 together coordinate Ca(2+). Positions 527-563 (DVDECASTPCKNGAKCLDGPNSYTCQCTEGFTGRHCE) constitute an EGF-like 14; calcium-binding domain. Positions 565 to 600 (DINECIPDPCHYGTCKDGIATFTCLCRPGYTGRLCD) constitute an EGF-like 15; calcium-binding domain. One can recognise an EGF-like 16; calcium-binding domain in the interval 602–638 (DINECLSQPCQNGGQCTDRENGYICTCPKGTTGVNCE). The EGF-like 17; calcium-binding domain occupies 640 to 675 (NLDDCASNPCDYGKCIDKIDGYECTCEPGYTGKMCN). Residues 677-713 (NIDECASNPCRNGGTCKDKINGFTCVCPDGYHDHMCL) form the EGF-like 18; calcium-binding domain. The 36-residue stretch at 715 to 750 (EVNECNSNPCIHGTCHDGINGYKCDCDAGWSGSNCD) folds into the EGF-like 19; calcium-binding domain. Residues 752-788 (NNNECESNPCMNGGTCKDMTGAYICTCRAGFSGPNCQ) enclose the EGF-like 20; calcium-binding domain. The region spanning 790-826 (NINECASNPCLNRGTCIDDVAGYKCNCMLPYTGAICE) is the EGF-like 21; calcium-binding domain. The region spanning 828 to 866 (VLAPCSGSPCKNGGRCKESEDYETFSCECPPGWQGQTCE) is the EGF-like 22 domain. The EGF-like 23; calcium-binding domain maps to 868-904 (DMNECVNRPCRNGAMCQNTNGSYKCNCKPGYAGRHCE). A glycan (N-linked (GlcNAc...) asparagine) is linked at asparagine 887. An EGF-like 24; calcium-binding domain is found at 906 to 942 (DIDDCQPNPCHNGGSCSDGINMFFCNCPAGFRGPKCE). Positions 944-980 (DINECASNPCKNGANCTDCVNSYTCTCQPGFSGIHCE) constitute an EGF-like 25; calcium-binding domain. Asparagine 958 carries N-linked (GlcNAc...) asparagine glycosylation. The 37-residue stretch at 982-1018 (NTPDCTESSCFNGGTCIDGINTFSCQCPPGFTGNYCQ) folds into the EGF-like 26 domain. In terms of domain architecture, EGF-like 27; calcium-binding spans 1020 to 1056 (DINECDSKPCLNGGTCQDSYGAYKCTCPQGYTGLNCQ). 2 EGF-like domains span residues 1058-1094 (LVRW…VYCD) and 1096-1142 (PSVS…SYCE). One can recognise an EGF-like 30; calcium-binding domain in the interval 1144-1180 (QVDECSPNPCQNGATCTDYLGGYSCECVAGYHGVNCS). N-linked (GlcNAc...) asparagine glycosylation occurs at asparagine 1178. The EGF-like 31; calcium-binding domain maps to 1182-1218 (EINECLSHPCHNGGTCIDLINTYKCSCPRGTQGVHCE). Positions 1220–1264 (NVDDCTPFYDSVSLEPKCFNNGKCFDRVGGYNCICPPGFVGERCE) constitute an EGF-like 32; calcium-binding domain. 4 consecutive EGF-like domains span residues 1266 to 1304 (DVNE…RRCD), 1306 to 1345 (VVDG…ATCE), 1347 to 1383 (DART…ATCQ), and 1386 to 1424 (VVSP…LFCH). Threonine 1400 is a glycosylation site (O-linked (Fuc...) threonine; alternate). Residue threonine 1400 is glycosylated (O-linked (GalNAc...) threonine; alternate). LNR repeat units lie at residues 1447–1487 (CENE…PWKN), 1488–1529 (CTQS…CNPL), and 1530–1564 (YDQY…NMPE). The Ca(2+) site is built by asparagine 1458, aspartate 1473, and aspartate 1476. Asparagine 1487 is a glycosylation site (N-linked (GlcNAc...) asparagine). 5 cysteine pairs are disulfide-bonded: cysteine 1488–cysteine 1512, cysteine 1494–cysteine 1507, cysteine 1503–cysteine 1519, cysteine 1534–cysteine 1547, and cysteine 1543–cysteine 1559. Aspartate 1500 provides a ligand contact to Ca(2+). N-linked (GlcNAc...) asparagine glycosylation occurs at asparagine 1508. The Ca(2+) site is built by aspartate 1515, aspartate 1518, aspartate 1540, aspartate 1555, and aspartate 1558. An N-linked (GlcNAc...) asparagine glycan is attached at asparagine 1584. A helical membrane pass occupies residues 1731–1751 (AMFSMLVIPLLIIFVIMVVIV). Residues 1752–2522 (NKKRRREHGQ…QRTHIPEAFK (771 aa)) lie on the Cytoplasmic side of the membrane. ANK repeat units lie at residues 1877 to 1920 (DGFT…QLHN), 1925 to 1954 (TGET…DANV), 1958 to 1988 (MGRT…DLDA), 1992 to 2021 (DGTT…DVNA), 2025 to 2054 (FGKS…NKDM), and 2058 to 2087 (KEET…NRDI). Disordered regions lie at residues 2146-2229 (MKPS…MPLN), 2365-2404 (LMQA…PFCS), and 2449-2522 (LTPP…EAFK). The segment covering 2184–2200 (SLLDSGSSGVLSPVDSL) has biased composition (low complexity). The segment covering 2218–2229 (SPFQQSPSMPLN) has biased composition (polar residues). Residues 2365 to 2390 (LMQAQQMQQQQNLQLHQSVQQQQHQN) show a composition bias toward low complexity. Composition is skewed to polar residues over residues 2391 to 2404 (SNAT…PFCS) and 2449 to 2469 (LTPP…SHQL). The span at 2479–2494 (PSPESPDQWSSSSPHS) shows a compositional bias: low complexity. The segment covering 2495–2514 (NMSDWSEGISSPPTSMQPQR) has biased composition (polar residues).

This sequence belongs to the NOTCH family. Post-translationally, O-glycosylated on the EGF-like domains. Contains both O-linked fucose and O-linked glucose. O-linked glycosylation by galnt11 is involved in determination of left/right symmetry: glycosylation promotes activation of notch1, possibly by promoting cleavage by adam17, modulating the balance between motile and immotile (sensory) cilia at the left-right organiser (LRO). Synthesized in the endoplasmic reticulum as an inactive form which is proteolytically cleaved by a furin-like convertase in the trans-Golgi network before it reaches the plasma membrane to yield an active, ligand-accessible form. Cleavage results in a C-terminal fragment N(TM) and a N-terminal fragment N(EC). Following ligand binding, it is cleaved by adam17 to yield a membrane-associated intermediate fragment called notch extracellular truncation (NEXT). Following endocytosis, this fragment is then cleaved by presenilin dependent gamma-secretase to release a Notch-derived peptide containing the intracellular domain (NICD) from the membrane.

Its subcellular location is the cell membrane. The protein localises to the nucleus. Functionally, functions as a receptor for membrane-bound ligands Jagged-1 (JAG1), Jagged-2 (JAG2) and Delta-1 (DLL1) to regulate cell-fate determination. Upon ligand activation through the released notch intracellular domain (NICD) it forms a transcriptional activator complex with RBPJ/RBPSUH and activates genes of the enhancer of split locus. Affects the implementation of differentiation, proliferation and apoptotic programs. Involved in angiogenesis; negatively regulates endothelial cell proliferation and migration and angiogenic sprouting. Involved in the maturation of both CD4(+) and CD8(+) cells in the thymus. Important for follicular differentiation and possibly cell fate selection within the follicle. During cerebellar development, functions as a receptor for neuronal DNER and is involved in the differentiation of Bergmann glia. Represses neuronal and myogenic differentiation. May play an essential role in postimplantation development, probably in some aspect of cell specification and/or differentiation. May be involved in mesoderm development, somite formation and neurogenesis. Involved in determination of left/right symmetry by modulating the balance between motile and immotile (sensory) cilia at the left-right organiser (LRO). This is Neurogenic locus notch homolog protein 1 (notch1) from Xenopus tropicalis (Western clawed frog).